We begin with the raw amino-acid sequence, 1357 residues long: DNA-directed RNA polymerase subunit beta (1357 aa).

Belongs to the RNA polymerase beta chain family. The RNAP catalytic core consists of 2 alpha, 1 beta, 1 beta' and 1 omega subunit. When a sigma factor is associated with the core the holoenzyme is formed, which can initiate transcription.

The enzyme catalyses RNA(n) + a ribonucleoside 5'-triphosphate = RNA(n+1) + diphosphate. DNA-dependent RNA polymerase catalyzes the transcription of DNA into RNA using the four ribonucleoside triphosphates as substrates. The polypeptide is DNA-directed RNA polymerase subunit beta (Pseudomonas entomophila (strain L48)).